The following is a 336-amino-acid chain: Heat-inducible transcription repressor HrcA (336 aa).

Belongs to the HrcA family.

Functionally, negative regulator of class I heat shock genes (grpE-dnaK-dnaJ and groELS operons). Prevents heat-shock induction of these operons. The protein is Heat-inducible transcription repressor HrcA of Variovorax paradoxus (strain S110).